Reading from the N-terminus, the 224-residue chain is Cytidylate kinase (224 aa).

10-18 (GPASAGKST) is a binding site for ATP.

Belongs to the cytidylate kinase family. Type 1 subfamily.

Its subcellular location is the cytoplasm. The catalysed reaction is CMP + ATP = CDP + ADP. It carries out the reaction dCMP + ATP = dCDP + ADP. The sequence is that of Cytidylate kinase from Leuconostoc mesenteroides subsp. mesenteroides (strain ATCC 8293 / DSM 20343 / BCRC 11652 / CCM 1803 / JCM 6124 / NCDO 523 / NBRC 100496 / NCIMB 8023 / NCTC 12954 / NRRL B-1118 / 37Y).